We begin with the raw amino-acid sequence, 555 residues long: CTP synthase (555 aa).

An amidoligase domain region spans residues 1–267 (MAKYIFVTGG…GNYLTLRLGL (267 aa)). Position 13 (serine 13) interacts with CTP. Serine 13 contacts UTP. Residue 14–19 (SVGKGI) coordinates ATP. Tyrosine 54 contacts L-glutamine. Aspartate 71 serves as a coordination point for ATP. Mg(2+)-binding residues include aspartate 71 and glutamate 141. CTP contacts are provided by residues 148–150 (DIE), 188–193 (KTKPTQ), and lysine 224. Residues 188–193 (KTKPTQ) and lysine 224 each bind UTP. In terms of domain architecture, Glutamine amidotransferase type-1 spans 292–535 (AIALVGKYVE…IAAAAQTFRE (244 aa)). Residue glycine 354 participates in L-glutamine binding. Residue cysteine 381 is the Nucleophile; for glutamine hydrolysis of the active site. L-glutamine is bound by residues 382–385 (LGMQ), glutamate 406, and arginine 463. Residues histidine 508 and glutamate 510 contribute to the active site.

It belongs to the CTP synthase family. Homotetramer.

It carries out the reaction UTP + L-glutamine + ATP + H2O = CTP + L-glutamate + ADP + phosphate + 2 H(+). It catalyses the reaction L-glutamine + H2O = L-glutamate + NH4(+). The enzyme catalyses UTP + NH4(+) + ATP = CTP + ADP + phosphate + 2 H(+). The protein operates within pyrimidine metabolism; CTP biosynthesis via de novo pathway; CTP from UDP: step 2/2. Allosterically activated by GTP, when glutamine is the substrate; GTP has no effect on the reaction when ammonia is the substrate. The allosteric effector GTP functions by stabilizing the protein conformation that binds the tetrahedral intermediate(s) formed during glutamine hydrolysis. Inhibited by the product CTP, via allosteric rather than competitive inhibition. Catalyzes the ATP-dependent amination of UTP to CTP with either L-glutamine or ammonia as the source of nitrogen. Regulates intracellular CTP levels through interactions with the four ribonucleotide triphosphates. The chain is CTP synthase from Roseiflexus castenholzii (strain DSM 13941 / HLO8).